Reading from the N-terminus, the 241-residue chain is MELERFRVGLTPTVFYIPGFITDEEQTQLLNHIYGASGSKWKTLKNRRLQNWGGMVHEKGLVPQELPPWLTKITAEIHESSGLFPSAINHVLINEYHPDQGIMPHQDGPAYFPVVAILSLGSPVVMDFTPHLRLRSGDGYISKDQSPCAESCAPERDSFSVLLMPQSLLIFKDDAYSDFLHGISDSPTQCYNQVVNEAEALAYSNEEDSRKDGDKIFHRDQTRVSLTCRLVPKVRKNLFRF.

The 146-residue stretch at Ala-87–Pro-232 folds into the Fe2OG dioxygenase domain. 3 residues coordinate Fe cation: His-105, Asp-107, and His-181. Positions 223 and 229 each coordinate 2-oxoglutarate.

Belongs to the alkB family. Requires Fe(2+) as cofactor.

The protein resides in the nucleus. Probable RNA demethylase that binds to both N6-methyladenosine-containing- (m(6)A) and C5-methylcytidine-containing- (m(5)C) RNAs, thus being a probable m(6)A and m(5)C eraser. Involved in responses to abscisic acid (ABA) via the modulation of the expression of ABA signaling-related genes (e.g. ABI3 and ABI4). Acts as a negative regulator during seed germination under abiotic stresses (e.g. salt, cold and ABA). Positive modulator of seedling growth and survival in response to drought and heat, but counteracts tolerance to salt. The sequence is that of Alkylated DNA repair protein ALKBH6 homolog from Arabidopsis thaliana (Mouse-ear cress).